A 623-amino-acid polypeptide reads, in one-letter code: Chaperone protein HtpG (623 aa).

The a; substrate-binding stretch occupies residues 1–330 (MIMTQEKKKF…SEDLPLNISR (330 aa)). The interval 331–546 (ESLQHNSVLE…DAAMDIRMER (216 aa)) is b. The segment at 477–497 (SDIDVEQTTSQSEEKNTDSKK) is disordered. Residues 488 to 497 (SEEKNTDSKK) are compositionally biased toward basic and acidic residues. Positions 547-623 (FLIEQKQIAN…LNDIVQKAIL (77 aa)) are c.

Belongs to the heat shock protein 90 family. Homodimer.

Its subcellular location is the cytoplasm. In terms of biological role, molecular chaperone. Has ATPase activity. The chain is Chaperone protein HtpG from Rickettsia massiliae (strain Mtu5).